The chain runs to 314 residues: ATP synthase gamma chain (314 aa).

This sequence belongs to the ATPase gamma chain family. In terms of assembly, F-type ATPases have 2 components, CF(1) - the catalytic core - and CF(0) - the membrane proton channel. CF(1) has five subunits: alpha(3), beta(3), gamma(1), delta(1), epsilon(1). CF(0) has three main subunits: a, b and c.

The protein localises to the cellular thylakoid membrane. In terms of biological role, produces ATP from ADP in the presence of a proton gradient across the membrane. The gamma chain is believed to be important in regulating ATPase activity and the flow of protons through the CF(0) complex. The sequence is that of ATP synthase gamma chain from Picosynechococcus sp. (strain ATCC 27264 / PCC 7002 / PR-6) (Agmenellum quadruplicatum).